The primary structure comprises 81 residues: Protein GPR15LG (81 aa).

A signal peptide spans 1 to 24; the sequence is MRFLALTSLLCILLLCLSFFSAEG. 2 cysteine pairs are disulfide-bonded: C40/C63 and C41/C60.

Interacts with SUSD2; the interaction is direct.

It is found in the secreted. Its function is as follows. Highly cationic protein that has multiple functions. Acts as a chemotactic factor that mediates lymphocytes recruitment to epithelia through binding and activation of the G-protein coupled receptor GPR15. May be a tumor suppressor; together with SUSD2 has a growth inhibitory effect on colon cancer cells which includes G1 cell cycle arrest. May regulate keratinocyte proliferation. In addition, through activation of Mas-related G protein-coupled receptors (MRGPRs) contributes to pruritogenesis by activating itch-selective sensory neurons and mast cells degranulation. In terms of biological role, has antimicrobial activity against Gram-positive bacteria, including Staphylococcus aureus and Actinomyces spec., and Mycoplasma hominis and lentivirus. This chain is Protein GPR15LG (GPR15LG), found in Sus scrofa (Pig).